The following is a 485-amino-acid chain: Probable cobyric acid synthase (485 aa).

A GATase cobBQ-type domain is found at 250 to 435 (EIEVAVIRLP…LHGLFDNRNI (186 aa)). The Nucleophile role is filled by Cys328. His427 is a catalytic residue.

This sequence belongs to the CobB/CobQ family. CobQ subfamily.

Its pathway is cofactor biosynthesis; adenosylcobalamin biosynthesis. Catalyzes amidations at positions B, D, E, and G on adenosylcobyrinic A,C-diamide. NH(2) groups are provided by glutamine, and one molecule of ATP is hydrogenolyzed for each amidation. The sequence is that of Probable cobyric acid synthase from Methanosarcina mazei (strain ATCC BAA-159 / DSM 3647 / Goe1 / Go1 / JCM 11833 / OCM 88) (Methanosarcina frisia).